The sequence spans 222 residues: Phosphoribosylformylglycinamidine synthase subunit PurQ (222 aa).

Positions 2 to 222 constitute a Glutamine amidotransferase type-1 domain; sequence KAAVITFPGS…RALLGGMALV (221 aa). Cys-86 serves as the catalytic Nucleophile. Residues His-194 and Glu-196 contribute to the active site.

As to quaternary structure, part of the FGAM synthase complex composed of 1 PurL, 1 PurQ and 2 PurS subunits.

It localises to the cytoplasm. The catalysed reaction is N(2)-formyl-N(1)-(5-phospho-beta-D-ribosyl)glycinamide + L-glutamine + ATP + H2O = 2-formamido-N(1)-(5-O-phospho-beta-D-ribosyl)acetamidine + L-glutamate + ADP + phosphate + H(+). It catalyses the reaction L-glutamine + H2O = L-glutamate + NH4(+). It participates in purine metabolism; IMP biosynthesis via de novo pathway; 5-amino-1-(5-phospho-D-ribosyl)imidazole from N(2)-formyl-N(1)-(5-phospho-D-ribosyl)glycinamide: step 1/2. Part of the phosphoribosylformylglycinamidine synthase complex involved in the purines biosynthetic pathway. Catalyzes the ATP-dependent conversion of formylglycinamide ribonucleotide (FGAR) and glutamine to yield formylglycinamidine ribonucleotide (FGAM) and glutamate. The FGAM synthase complex is composed of three subunits. PurQ produces an ammonia molecule by converting glutamine to glutamate. PurL transfers the ammonia molecule to FGAR to form FGAM in an ATP-dependent manner. PurS interacts with PurQ and PurL and is thought to assist in the transfer of the ammonia molecule from PurQ to PurL. This is Phosphoribosylformylglycinamidine synthase subunit PurQ from Cereibacter sphaeroides (strain ATCC 17023 / DSM 158 / JCM 6121 / CCUG 31486 / LMG 2827 / NBRC 12203 / NCIMB 8253 / ATH 2.4.1.) (Rhodobacter sphaeroides).